A 179-amino-acid polypeptide reads, in one-letter code: HTH-type transcriptional regulator AldR (179 aa).

One can recognise an HTH asnC-type domain in the interval 32 to 93 (LDEVDRRILS…DIDPVAVGLP (62 aa)). Residues 51 to 70 (NNALADTVGIAPSTCHGRVR) constitute a DNA-binding region (H-T-H motif).

As to quaternary structure, homooctamer. Homotetramer. Tetramer of dimers. The N-terminal DNA-binding domains are swapped, forming a dimer, and four dimers are assembled into an octamer through crystal symmetry.

The DNA-binding activity of AldR is modulated by interaction of AldR with various amino acids. Alanine, tryptophan, tyrosine and aspartate completely abolish the DNA binding ability of AldR. On the other hand, glutamate and asparagine reduce AldR binding to DNA but do not completely abolish it. Binding of amino acids can lead to structural modifications and changes in oligomeric association. Activity is also inhibited by 3 small molecule inhibitors, tetrahydroquinoline carbonitrile derivative (S010-0261), levothyroxine and liothyronine, which can disrupt the AldR-DNA complex. Functionally, transcriptional regulator that might play a role under hypoxic conditions. Regulates the expression of ald, which encodes L-alanine dehydrogenase. Serves as both an activator for ald expression in the presence of L-alanine and a repressor in the absence of L-alanine. Acts by binding directly to the upstream region of the ald gene. Four AldR-binding sites (O2, O1, O4 and O3) were identified upstream of the ald gene. O2, O1 and O4 are required for the induction of ald expression by alanine, while O3 is directly involved in the repression of ald expression, by occluding the access of RNA polymerase to the ald promoter. In addition to O3, both O1 and O4 are also necessary for full repression of ald expression in the absence of alanine. This Mycobacterium tuberculosis (strain ATCC 25618 / H37Rv) protein is HTH-type transcriptional regulator AldR.